A 3563-amino-acid chain; its full sequence is D-lysergyl-peptide-synthetase subunit 1 (3563 aa).

Positions 307-706 (SCSPRPNPQA…LGRKDDQVKI (400 aa)) are adenylation (A) domain 1. In terms of domain architecture, Carrier 1 spans 844–921 (EPKSDREKLL…EIVIVSTSAT (78 aa)). Ser-881 carries the O-(pantetheine 4'-phosphoryl)serine modification. The segment at 963 to 1354 (EDIYPCTHLQ…EHILTEIHSN (392 aa)) is condensation (C) domain 1. Positions 1397-1804 (QEKCQAQPDA…RRKDAQVKIR (408 aa)) are adenylation (A) domain 2. The Carrier 2 domain occupies 1944 to 2020 (PPSNATEHEI…KLALARGVTQ (77 aa)). Position 1981 is an O-(pantetheine 4'-phosphoryl)serine (Ser-1981). Residues 2067 to 2486 (ERIYPCSPIQ…ALPVLDEDQM (420 aa)) form a condensation (C) domain 2 region. The tract at residues 2511 to 2909 (QCIRCPDSPS…GRNDDQVKVR (399 aa)) is adenylation (A) domain 3. Residues 3025-3104 (PPRTALEAEL…RFGSYRRAGA (80 aa)) form the Carrier 3 domain. Ser-3064 is modified (O-(pantetheine 4'-phosphoryl)serine). Positions 3166 to 3451 (LYFSKPMASE…VAKSTTWSSD (286 aa)) are cyclization (Cyc) domain.

It belongs to the NRP synthetase family.

It functions in the pathway alkaloid biosynthesis; ergot alkaloid biosynthesis. Functionally, D-lysergyl-peptide-synthetase subunit 1; part of the gene cluster that mediates the biosynthesis of fungal ergot alkaloid. DmaW catalyzes the first step of ergot alkaloid biosynthesis by condensing dimethylallyl diphosphate (DMAP) and tryptophan to form 4-dimethylallyl-L-tryptophan. The second step is catalyzed by the methyltransferase easF that methylates 4-dimethylallyl-L-tryptophan in the presence of S-adenosyl-L-methionine, resulting in the formation of 4-dimethylallyl-L-abrine. The catalase easC and the FAD-dependent oxidoreductase easE then transform 4-dimethylallyl-L-abrine to chanoclavine-I which is further oxidized by easD in the presence of NAD(+), resulting in the formation of chanoclavine-I aldehyde. Agroclavine dehydrogenase easG then mediates the conversion of chanoclavine-I aldehyde to agroclavine via a non-enzymatic adduct reaction: the substrate is an iminium intermediate that is formed spontaneously from chanoclavine-I aldehyde in the presence of glutathione. The presence of easA is not required to complete this reaction. Further conversion of agroclavine to paspalic acid is a two-step process involving oxidation of agroclavine to elymoclavine and of elymoclavine to paspalic acid, the second step being performed by the elymoclavine oxidase cloA. Paspalic acid is then further converted to D-lysergic acid. Ergopeptines are assembled from D-lysergic acid and three different amino acids by the D-lysergyl-peptide-synthetases composed each of a monomudular and a trimodular nonribosomal peptide synthetase subunit. LpsB and lpsC encode the monomodular subunits responsible for D-lysergic acid activation and incorporation into the ergopeptine backbone. LpsA1 and A2 subunits encode the trimodular nonribosomal peptide synthetase assembling the tripeptide portion of ergopeptines. LpsA1 is responsible for formation of the major ergopeptine, ergotamine, and lpsA2 for alpha-ergocryptine, the minor ergopeptine of the total alkaloid mixture elaborated by C.purpurea. D-lysergyl-tripeptides are assembled by the nonribosomal peptide synthetases and released as N-(D-lysergyl-aminoacyl)-lactams. Cyclolization of the D-lysergyl-tripeptides is performed by the Fe(2+)/2-ketoglutarate-dependent dioxygenase easH which introduces a hydroxyl group into N-(D-lysergyl-aminoacyl)-lactam at alpha-C of the aminoacyl residue followed by spontaneous condensation with the terminal lactam carbonyl group. The chain is D-lysergyl-peptide-synthetase subunit 1 from Claviceps purpurea (Ergot fungus).